The chain runs to 338 residues: Citramalyl-CoA lyase, mitochondrial (338 aa).

The transit peptide at 1 to 20 (MALCVLQNAVRGAAALPRLK) directs the protein to the mitochondrion. Residues Y48, K55, and K59 each contribute to the substrate site. N6-acetyllysine is present on residues K55, K59, and K64. An N6-acetyllysine; alternate mark is found at K80 and K90. N6-succinyllysine; alternate occurs at positions 80 and 90. A substrate-binding site is contributed by R105. The Mg(2+) site is built by E169 and D204. Position 270-271 (270-271 (IH)) interacts with substrate. N6-succinyllysine is present on K307. D318 is an active-site residue.

The protein belongs to the HpcH/HpaI aldolase family. Citrate lyase beta subunit-like subfamily. Homotrimer. Mg(2+) is required as a cofactor.

It localises to the mitochondrion. It catalyses the reaction glyoxylate + acetyl-CoA + H2O = (S)-malate + CoA + H(+). The catalysed reaction is propanoyl-CoA + glyoxylate + H2O = 3-methylmalate + CoA + H(+). The enzyme catalyses (3S)-citramalyl-CoA = pyruvate + acetyl-CoA. It carries out the reaction (S)-malyl-CoA + H2O = (S)-malate + CoA + H(+). Functionally, mitochondrial citramalyl-CoA lyase indirectly involved in the vitamin B12 metabolism. Converts citramalyl-CoA into acetyl-CoA and pyruvate in the C5-dicarboxylate catabolism pathway. The C5-dicarboxylate catabolism pathway is required to detoxify itaconate, a vitamin B12-poisoning metabolite. Also acts as a malate synthase in vitro, converting glyoxylate and acetyl-CoA to malate. Also displays malyl-CoA thioesterase activity. Also acts as a beta-methylmalate synthase in vitro, by mediating conversion of glyoxylate and propionyl-CoA to beta-methylmalate. Also has very weak citramalate synthase activity in vitro. The polypeptide is Citramalyl-CoA lyase, mitochondrial (Clybl) (Rattus norvegicus (Rat)).